A 485-amino-acid chain; its full sequence is Amidophosphoribosyltransferase, chloroplastic (485 aa).

Residues 1 to 18 (KTTNTFASVNDDEKPREE) constitute a chloroplast transit peptide. Residue cysteine 19 is the Nucleophile of the active site. Positions 19 to 237 (CGVVGIYGDP…PGEVVVVDHT (219 aa)) constitute a Glutamine amidotransferase type-2 domain. Cysteine 253 provides a ligand contact to [4Fe-4S] cluster. 3 residues coordinate Mg(2+): serine 300, aspartate 362, and aspartate 363. Residues cysteine 399, cysteine 450, and cysteine 453 each contribute to the [4Fe-4S] cluster site.

It in the C-terminal section; belongs to the purine/pyrimidine phosphoribosyltransferase family. Mg(2+) serves as cofactor. [4Fe-4S] cluster is required as a cofactor.

Its subcellular location is the plastid. The protein resides in the chloroplast. The enzyme catalyses 5-phospho-beta-D-ribosylamine + L-glutamate + diphosphate = 5-phospho-alpha-D-ribose 1-diphosphate + L-glutamine + H2O. It participates in purine metabolism; IMP biosynthesis via de novo pathway; N(1)-(5-phospho-D-ribosyl)glycinamide from 5-phospho-alpha-D-ribose 1-diphosphate: step 1/2. The protein is Amidophosphoribosyltransferase, chloroplastic (PUR1) of Vigna aconitifolia (Moth bean).